Reading from the N-terminus, the 524-residue chain is MSWNNIGVVEMTPILFQFLLSSLCVFLLFVFIRFLNDIWWTPIRLQRVFRQQGIRGPSYGFLYGNTKEILNMRKESMSRPMDYLSHNIFPRLQPHLYSWLNIYGKNFLNWYGPRAQFVVTQVDFVKETMIKDQAYPKMDPEWFAKKLLGDGIVTSKGKKWAKHRRLANHAFHAESLKSMTPAMIASVEMMLKRWKQHEGREIDVFQEFKILTSEVISRTAFGSSYLDGKDIFDRLTQLGIIITRNSYKVKLPGISLFYKSNDEIEAEKLDQGLYDSILRIMEKREKESTMSGEVGSFGTDFLGLLMKAMNDADEKNRITAQDVVDECKTFYVAGQETTTTLLAWVIFLLGIHTDWQEKARQEVLNLFGQEIPNSDGLAKLKTVNMIINETLRLYPPVIFLTRKVKEETKFGKLTLPANVHIVVPTLALHHDEQIWGDDALLFKPERFSQGVAKATNNNAAAFFPFGLGPRSCVGLNFATNEAKIALAMILQCYSFALSPTYIHSPVQILTVRPQHGLQVMLQPL.

A helical transmembrane segment spans residues 12 to 32; the sequence is TPILFQFLLSSLCVFLLFVFI. Residue C472 coordinates heme.

This sequence belongs to the cytochrome P450 family. It depends on heme as a cofactor.

The protein localises to the membrane. In terms of biological role, probable heme-thiolate monooxygenase. The polypeptide is Cytochrome P450 CYP749A22 (Panax ginseng (Korean ginseng)).